The chain runs to 293 residues: Nucleotide-binding protein OB2468 (293 aa).

Residue 14–21 coordinates ATP; the sequence is GMSGAGKT. 65 to 68 serves as a coordination point for GTP; it reads DLRG.

Belongs to the RapZ-like family.

Functionally, displays ATPase and GTPase activities. The polypeptide is Nucleotide-binding protein OB2468 (Oceanobacillus iheyensis (strain DSM 14371 / CIP 107618 / JCM 11309 / KCTC 3954 / HTE831)).